The sequence spans 254 residues: Alcohol dehydrogenase (254 aa).

NAD(+) is bound at residue 10–33 (FVAGLGGIGLDTSREIVKSGPKNL). Substrate is bound at residue serine 138. Tyrosine 151 serves as the catalytic Proton acceptor.

This sequence belongs to the short-chain dehydrogenases/reductases (SDR) family. In terms of assembly, homodimer.

The enzyme catalyses a primary alcohol + NAD(+) = an aldehyde + NADH + H(+). It carries out the reaction a secondary alcohol + NAD(+) = a ketone + NADH + H(+). This chain is Alcohol dehydrogenase (Adh), found in Drosophila flavomontana (Fruit fly).